We begin with the raw amino-acid sequence, 402 residues long: Guanine nucleotide-binding protein subunit alpha-1 (402 aa).

A compositionally biased stretch (polar residues) spans 1-12 (MGCSASKPSEPS). The segment at 1–70 (MGCSASKPSE…PEPQKPAEPA (70 aa)) is disordered. Residue G2 is the site of N-myristoyl glycine attachment. A lipid anchor (S-palmitoyl cysteine) is attached at C3. Over residues 23–33 (KKVEQVPEPKP) the composition is skewed to basic and acidic residues. The segment covering 34 to 69 (EPQPQPEPQPQPEPPKPAEPAPAPAPAPEPQKPAEP) has biased composition (pro residues). Positions 82–402 (EAYGLLLCGA…FISDKYYQDA (321 aa)) constitute a G-alpha domain. Residues 85–98 (GLLLCGAGESGKTT) are G1 motif. Residues E93, S94, G95, K96, T97, T98, D198, L223, S229, G251, N317, K318, D320, and A377 each contribute to the GTP site. T97 contacts Mg(2+). Residues 221–229 (DVLRARIRS) form a G2 motif region. A Mg(2+)-binding site is contributed by S229. Positions 244–253 (IRIFDVGGQK) are G3 motif. The segment at 313–320 (FLVCNKFD) is G4 motif. The G5 motif stretch occupies residues 375–380 (IVALNG).

Belongs to the G-alpha family. As to quaternary structure, g proteins are composed of 3 units; alpha, beta and gamma. The alpha chain contains the guanine nucleotide binding site. The cofactor is Mg(2+).

Its subcellular location is the cytoplasm. The protein resides in the perinuclear region. It is found in the endomembrane system. Guanine nucleotide-binding proteins (G proteins) are involved as modulators or transducers in various transmembrane signaling systems. The sequence is that of Guanine nucleotide-binding protein subunit alpha-1 (GA1) from Trichomonas vaginalis.